A 424-amino-acid chain; its full sequence is Chloroquine resistance transporter (424 aa).

A compositionally biased stretch (basic residues) spans 1 to 10 (MTILKKKKKG). The disordered stretch occupies residues 1–32 (MTILKKKKKGSPQITPDERYRELDSHAQNESE). Residues 1–57 (MTILKKKKKGSPQITPDERYRELDSHAQNESEIQEDVPISRKIANFLKLAYNEIREN) are Cytoplasmic-facing. The span at 16 to 29 (PDERYRELDSHAQN) shows a compositional bias: basic and acidic residues. The chain crosses the membrane as a helical span at residues 58–78 (ISIYLLIIVYLCVCVMNKLLA). Residues 79-89 (KRTLKKIGNYS) are Vacuolar-facing. An N-linked (GlcNAc...) asparagine glycan is attached at N87. A helical membrane pass occupies residues 90 to 110 (FVTSETHNCICMVVFFALYFM). Residues 111–124 (FGRRVMSAKERHRN) are Cytoplasmic-facing. A helical membrane pass occupies residues 125–145 (FGVQFLLISLLDACSVIIAFI). The Vacuolar portion of the chain corresponds to 146–153 (GLTRTTGN). A helical transmembrane segment spans residues 154–174 (IQSFVMQLSIPINMFFCFLIL). Residues 175–179 (RYRYH) lie on the Cytoplasmic side of the membrane. Residues 180-200 (LFNYVGAFIIVVTIAVVEFML) traverse the membrane as a helical segment. At 201 to 208 (SFETQEEN) the chain is on the vacuolar side. Residues 209 to 229 (SIVFNLVLIASLIPLSFSNMT) traverse the membrane as a helical segment. Residues 230 to 246 (REIVFKKYKINILRLNA) lie on the Cytoplasmic side of the membrane. The helical transmembrane segment at 247 to 267 (VVSFFQIFTSCLMLPMYTLPF) threads the bilayer. Over 268–316 (LKQINLPFSEIGTNIKNGFRCLFLGQNTIVENCGLGMSKMCDDCEGAWK) the chain is Vacuolar. 2 disulfide bridges follow: C288–C311 and C300–C308. Residues 317 to 337 (TFIAYSFFNICDNLITSFIIE) form a helical membrane-spanning segment. The Cytoplasmic segment spans residues 338-345 (KFSTMTYT). The chain crosses the membrane as a helical span at residues 346 to 366 (IVSCIQGPAIAIAYYFKFLAG). The Vacuolar portion of the chain corresponds to 367–376 (DAVMQPRMLD). The helical transmembrane segment at 377-397 (FVTLFGYLFGSIIYRIGNIIL) threads the bilayer. Topologically, residues 398–424 (EKKRMMEAGNDDDSEGELTNADSIITH) are cytoplasmic.

The protein belongs to the CRT-like transporter family.

It is found in the vacuole membrane. In terms of biological role, nutrient transporter. Involved in maintaining the osmotic homeostasis of the digestive vacuole. In Plasmodium vivax (strain Salvador I), this protein is Chloroquine resistance transporter.